Consider the following 339-residue polypeptide: MVSERSLDVLRAIVQDYVSSCEPVGSKSIVERHSFGVSAATIRNDMALLEEEELIAAPHTSSGRIPTDKGYRLFVDHLAEARPLSPAQRTAIEILLGQSVDLDDVLSRTVRLLSQLTNQTAIVQYPSLSRSRIRHIELVSLAPRRLLSVLITDSGAVEQRVIELTDELAEADIAEIRGAINGAAAGLSLADAAVRLSELPDALADRARALVAPVASALLDQIAANRQDRLMMAGAANLVRTGDDFPSSITPVLEAIEEQVVLLRLFDEMAHDQHSVAVSIGRENDGFGLTEASVMSSGYSSAGADIARVGLIGPLRMDYSGNMAAVRAVARYLSRLLGD.

This sequence belongs to the HrcA family.

Its function is as follows. Negative regulator of class I heat shock genes (grpE-dnaK-dnaJ and groELS operons). Prevents heat-shock induction of these operons. In Leifsonia xyli subsp. xyli (strain CTCB07), this protein is Heat-inducible transcription repressor HrcA.